The primary structure comprises 324 residues: MASEALHQVGDGEEAVLKKENFNMMNALDQLPKPFPNPKSMNRTVTTKGLPLSSKGNLVNFLEDDTINLPKPMPVDDSDCSSDDTSISAFSSTLLNPIKLAVTQPNSSFFAGMLEGELNKLSFSPMAKNTEKEDLALGPCPCPSKCQMATRGLLDLDNPELETETSSTHSESSVVVDLPDTPFIFEHTVSNSTAVISWTYALGKQPVSFYQVLLQEAAETQENELPKAKNRPWIFNKILGTTVKLMELKPNTCYCLTVRAANTAGVGKWCKPYKFATLATDFSSFPENNPIQITVRRKEPQRKIVSIGLEEMRRLEDLEYLFPY.

Positions 179-280 constitute a Fibronectin type-III domain; that stretch reads PDTPFIFEHT…KPYKFATLAT (102 aa).

The polypeptide is Fibronectin type III domain-containing protein 8 (FNDC8) (Macaca fascicularis (Crab-eating macaque)).